The chain runs to 504 residues: 2-isopropylmalate synthase (504 aa).

The region spanning 6–267 is the Pyruvate carboxyltransferase domain; the sequence is IIVFDTTLRD…YTDINFKEIY (262 aa). Mn(2+)-binding residues include Asp15, His201, His203, and Asn237. Residues 391-504 are regulatory domain; it reads EIIALSSSEC…ALNSYISMKQ (114 aa).

Belongs to the alpha-IPM synthase/homocitrate synthase family. LeuA type 1 subfamily. Homodimer. The cofactor is Mn(2+).

The protein resides in the cytoplasm. It catalyses the reaction 3-methyl-2-oxobutanoate + acetyl-CoA + H2O = (2S)-2-isopropylmalate + CoA + H(+). Its pathway is amino-acid biosynthesis; L-leucine biosynthesis; L-leucine from 3-methyl-2-oxobutanoate: step 1/4. Its function is as follows. Catalyzes the condensation of the acetyl group of acetyl-CoA with 3-methyl-2-oxobutanoate (2-ketoisovalerate) to form 3-carboxy-3-hydroxy-4-methylpentanoate (2-isopropylmalate). This is 2-isopropylmalate synthase from Campylobacter hominis (strain ATCC BAA-381 / DSM 21671 / CCUG 45161 / LMG 19568 / NCTC 13146 / CH001A).